The chain runs to 691 residues: MIAGQVSKPLLSVRSEMNAELRGEDKAATSDSELNEPLLAPAESNDSEDTPSKLFGARGNTVLPDPGTPDQHQACQTHPTFPVGPQPLLTAQQLASAVAGVMPGGPPALNQPILIPFNMAGQLGGQQGLVLTLPTANLTNIQGLVAAAAAGGIMTLPLQNLQATSSLNSQLQQLQQLQLQQQQQQQQQQQQQQQQQQQPPPPPTSQHPQPASQAPPQSQPTPPHQPPPASQQLPAPPAQLEQATQPQQHQPHSHPQNQTQNQPSPTQQSSSPPQKPSPSPGHSLPSPLTPPNPLQLVNNPLASQAAAAAAAMGSIASSQAFGNALSSLQGVTGQLVTNAQGQIIGTIPLMPNPGPSSQAASGTQGLQVQPITPQLLTNAQGQIIATVIGNQILPVINTQGITLSPIKPGQQLHQSSQTSVGQAGTQGNLLHLAHGQAATSHSPVRQASSSSSSSSSSSALSVGQLVSNPQTAAGEVDGVNLEEIREFAKAFKIRRLSLGLTQTQVGQALSATEGPAYSQSAICRHTILRSHFFLPQEAQENTIASSLTAKLNPGLLYPARFEKLDITPKSAQKIKPVLERWMAEAEARHRAGMQNLTEFIGSEPSKKRKRRTSFTPQALEILNAHFEKNTHPSGQEMTEIAEKLNYDREVVRVWFCNKRQALKNTIKRLKQHEPTSAAPLEPLADSPEENC.

3 disordered regions span residues 1–61 (MIAG…RGNT), 188–297 (QQQQ…LQLV), and 435–461 (GQAATSHSPVRQASSSSSSSSSSSALS). A compositionally biased stretch (basic and acidic residues) spans 17 to 28 (MNAELRGEDKAA). Low complexity-rich tracts occupy residues 188–197 (QQQQQQQQQQ) and 206–216 (QHPQPASQAPP). Pro residues predominate over residues 217–237 (QSQPTPPHQPPPASQQLPAPP). Low complexity predominate over residues 238 to 272 (AQLEQATQPQQHQPHSHPQNQTQNQPSPTQQSSSP). The span at 437–447 (AATSHSPVRQA) shows a compositional bias: polar residues. The span at 448-458 (SSSSSSSSSSS) shows a compositional bias: low complexity. The region spanning 476–586 (VDGVNLEEIR…VLERWMAEAE (111 aa)) is the POU-specific domain. Positions 607–666 (KRKRRTSFTPQALEILNAHFEKNTHPSGQEMTEIAEKLNYDREVVRVWFCNKRQALKNTI) form a DNA-binding region, homeobox. A disordered region spans residues 670–691 (KQHEPTSAAPLEPLADSPEENC).

This sequence belongs to the POU transcription factor family. Class-6 subfamily. Expressed in kidney, heart, muscle, spleen and ovary, but not in lung.

The protein resides in the nucleus. Probable transcription factor likely to be involved in early steps in the differentiation of amacrine and ganglion cells. Recognizes and binds to the DNA sequence 5'-ATGCAAAT-3'. This is POU domain, class 6, transcription factor 2 (Pou6f2) from Mus musculus (Mouse).